A 141-amino-acid chain; its full sequence is Acetyltransferase YpeA (141 aa).

In terms of domain architecture, N-acetyltransferase spans 1-141 (MEIRVFRQED…GKRLIEDEEY (141 aa)).

The protein belongs to the acetyltransferase family. YpeA subfamily.

This chain is Acetyltransferase YpeA, found in Salmonella choleraesuis (strain SC-B67).